The following is a 698-amino-acid chain: Cytochrome c oxidase subunit 1 (698 aa).

The chain crosses the membrane as a helical span at residues 65-85 (INYLYFSMVTGLSGAALATMI). Glutamate 88 is a binding site for Ca(2+). Histidine 111 provides a ligand contact to Fe(II)-heme a. The next 8 helical transmembrane spans lie at 113–133 (LIMV…NFLI), 147–167 (LNSI…KIGF), 304–324 (ILIL…TNLL), 349–369 (IFLT…AVIM), 395–415 (LFWF…FGFI), 434–454 (IWAI…HMYL), 468–488 (ITIM…LSLV), and 498–518 (FLFS…GMWL). Histidine 401 contributes to the Cu cation binding site. A cross-link (1'-histidyl-3'-tyrosine (His-Tyr)) is located at residues 401–405 (HPEVY). O2 is bound at residue tyrosine 405. The Cu cation site is built by histidine 450 and histidine 451. Mg(2+) contacts are provided by histidine 528 and aspartate 529. Transmembrane regions (helical) follow at residues 533–553 (VVAH…FSGF), 574–594 (LIYY…LGFS), and 613–633 (MSTA…LMIF). Histidine 536 lines the heme a3 pocket. Histidine 538 contributes to the Fe(II)-heme a binding site.

Belongs to the heme-copper respiratory oxidase family. In terms of assembly, component of the cytochrome c oxidase (complex IV, CIV), a multisubunit enzyme composed of a catalytic core of 3 subunits and several supernumerary subunits. The complex exists as a monomer or a dimer and forms supercomplexes (SCs) in the inner mitochondrial membrane with ubiquinol-cytochrome c oxidoreductase (cytochrome b-c1 complex, complex III, CIII). The cofactor is heme. It depends on Cu cation as a cofactor.

It is found in the mitochondrion inner membrane. It carries out the reaction 4 Fe(II)-[cytochrome c] + O2 + 8 H(+)(in) = 4 Fe(III)-[cytochrome c] + 2 H2O + 4 H(+)(out). It functions in the pathway energy metabolism; oxidative phosphorylation. Its function is as follows. Component of the cytochrome c oxidase, the last enzyme in the mitochondrial electron transport chain which drives oxidative phosphorylation. The respiratory chain contains 3 multisubunit complexes succinate dehydrogenase (complex II, CII), ubiquinol-cytochrome c oxidoreductase (cytochrome b-c1 complex, complex III, CIII) and cytochrome c oxidase (complex IV, CIV), that cooperate to transfer electrons derived from NADH and succinate to molecular oxygen, creating an electrochemical gradient over the inner membrane that drives transmembrane transport and the ATP synthase. Cytochrome c oxidase is the component of the respiratory chain that catalyzes the reduction of oxygen to water. Electrons originating from reduced cytochrome c in the intermembrane space (IMS) are transferred via the dinuclear copper A center (CU(A)) of subunit 2 and heme A of subunit 1 to the active site in subunit 1, a binuclear center (BNC) formed by heme A3 and copper B (CU(B)). The BNC reduces molecular oxygen to 2 water molecules using 4 electrons from cytochrome c in the IMS and 4 protons from the mitochondrial matrix. The sequence is that of Cytochrome c oxidase subunit 1 (COI) from Tetrahymena pyriformis.